The chain runs to 309 residues: tRNA dimethylallyltransferase (309 aa).

Residue Gly8–Ser15 coordinates ATP. Residue Thr10–Ser15 coordinates substrate. Residues Asp33 to Gln36 form an interaction with substrate tRNA region.

The protein belongs to the IPP transferase family. In terms of assembly, monomer. Mg(2+) serves as cofactor.

The enzyme catalyses adenosine(37) in tRNA + dimethylallyl diphosphate = N(6)-dimethylallyladenosine(37) in tRNA + diphosphate. Catalyzes the transfer of a dimethylallyl group onto the adenine at position 37 in tRNAs that read codons beginning with uridine, leading to the formation of N6-(dimethylallyl)adenosine (i(6)A). The chain is tRNA dimethylallyltransferase from Trichodesmium erythraeum (strain IMS101).